The primary structure comprises 365 residues: MLCVLCECRKAMLKRPKTLQPICKPCFYNVFETEIHNTIVESNLFFPGERVAIGASGGKDSTVLAHVMKTLNERYNYGVDFVLLSIDEGIHGYRDDSLETVKRNKVQYDMDLEVVSYSELYGWSMDQIVAQIGNKNNCTYCGVFRRQALDRGSAKLGIAHIVTGHNADDMAETVLMNLLRGDTARLDRCTELVTGSDDSPVKRSKPLKYAYEKEIVLYAHYKKLDYFSTECTYSPEAFRGTARTLIKNLEAIRPSTIIDIIHSGEAFVLKKKKEKKGKGSVVVKAKVEEKPVPSGGCSVPLAFDSSLGLSNRCTKCGYLSHNAVCKACVLLEGLNAGRAKMQIEGDSADGAAKNIKTLEKLALSI.

The protein belongs to the TtcA family. CTU1/NCS6/ATPBD3 subfamily.

Its subcellular location is the cytoplasm. The protein operates within tRNA modification; 5-methoxycarbonylmethyl-2-thiouridine-tRNA biosynthesis. In terms of biological role, plays a central role in 2-thiolation of mcm(5)S(2)U at tRNA wobble positions of tRNA(Lys), tRNA(Glu) and tRNA(Gln). Directly binds tRNAs and probably acts by catalyzing adenylation of tRNAs, an intermediate required for 2-thiolation. It is unclear whether it acts as a sulfurtransferase that transfers sulfur from thiocarboxylated URM1 onto the uridine of tRNAs at wobble position. Prior mcm(5) tRNA modification by the elongator complex is required for 2-thiolation. May also be involved in protein urmylation. The sequence is that of Cytoplasmic tRNA 2-thiolation protein 1 from Yarrowia lipolytica (strain CLIB 122 / E 150) (Yeast).